A 120-amino-acid polypeptide reads, in one-letter code: LOB domain-containing protein 8 (120 aa).

The LOB domain maps to 8–109 (RPCCVCITKN…AYLHELEEKI (102 aa)).

The protein belongs to the LOB domain-containing protein family.

This is LOB domain-containing protein 8 (LBD8) from Arabidopsis thaliana (Mouse-ear cress).